Reading from the N-terminus, the 217-residue chain is Peptide methionine sulfoxide reductase MsrA (217 aa).

The active site involves Cys-56.

This sequence belongs to the MsrA Met sulfoxide reductase family.

The enzyme catalyses L-methionyl-[protein] + [thioredoxin]-disulfide + H2O = L-methionyl-(S)-S-oxide-[protein] + [thioredoxin]-dithiol. It catalyses the reaction [thioredoxin]-disulfide + L-methionine + H2O = L-methionine (S)-S-oxide + [thioredoxin]-dithiol. Its function is as follows. Has an important function as a repair enzyme for proteins that have been inactivated by oxidation. Catalyzes the reversible oxidation-reduction of methionine sulfoxide in proteins to methionine. The sequence is that of Peptide methionine sulfoxide reductase MsrA from Corynebacterium melassecola.